Here is a 431-residue protein sequence, read N- to C-terminus: Keratin, type I cytoskeletal 40 (431 aa).

The segment at 1–89 (MTSDCSSTHC…CEDGVFTSNE (89 aa)) is head. One can recognise an IF rod domain in the interval 89-400 (EKETMQFLND…GLLDSEDSRL (312 aa)). The tract at residues 90-124 (KETMQFLNDRLASYLEKVRSLEETNAELESRIQEQ) is coil 1A. The tract at residues 125–135 (CEQDIPMVCPD) is linker 1. Positions 136-236 (YQRYFNTIED…HEEEVNLLRE (101 aa)) are coil 1B. Residues 237–252 (QLGDRLSVELDTAPTL) are linker 12. The interval 253 to 396 (DLNRVLDEMR…NTYWGLLDSE (144 aa)) is coil 2. Residues 397–431 (DSRLSCSPCSTTCTSSNTCEPCSAYVICTVENCCL) are tail.

The protein belongs to the intermediate filament family. Heterotetramer of two type I and two type II keratins. In terms of tissue distribution, expressed in skin and scalp. Also very weakly expressed in tongue, breast, colon and small intestine. In the hair follicle, it is specifically present in the upper hair cuticle. Not present in the upper cortex (at protein level).

Functionally, may play a role in late hair differentiation. This chain is Keratin, type I cytoskeletal 40 (KRT40), found in Homo sapiens (Human).